We begin with the raw amino-acid sequence, 341 residues long: MPIVSWPELLEKLLSTKEISEIEAKALMKAWLNDELLPVQTGAFLTALRAKQISGLELSSMAEVLRDACLFPYPLPEVFMVDTCGTGGDGADTFNISTAVAFVTASCGVTIAKHGNRSASGKVGSADVLEGLGIKLNAPLELVVKAIEKNNITFLFAPAWHSSLINLAPLRKALGVRTVFNLLGPLVNPFRPKAQVLGVAKSELLDPMVEALRNLGLERAVVVHGAGGLDEASLEGPNEVRFLENGQITSKTLDVEELGLTISPNSTLKGGSLATNQDILRSLFQGRGTQSQREVVALNSSLVFWASGKELDLKKGVTIALEAMELSKPLDKFNELKCCLE.

Residues glycine 85, 88-89 (GD), threonine 93, 95-98 (NIST), 113-121 (KHGNRSASG), and serine 125 each bind 5-phospho-alpha-D-ribose 1-diphosphate. Glycine 85 contributes to the anthranilate binding site. Serine 97 contacts Mg(2+). Asparagine 116 is a binding site for anthranilate. Anthranilate is bound at residue arginine 171. Mg(2+) contacts are provided by aspartate 230 and glutamate 231.

The protein belongs to the anthranilate phosphoribosyltransferase family. In terms of assembly, homodimer. It depends on Mg(2+) as a cofactor.

The catalysed reaction is N-(5-phospho-beta-D-ribosyl)anthranilate + diphosphate = 5-phospho-alpha-D-ribose 1-diphosphate + anthranilate. Its pathway is amino-acid biosynthesis; L-tryptophan biosynthesis; L-tryptophan from chorismate: step 2/5. In terms of biological role, catalyzes the transfer of the phosphoribosyl group of 5-phosphorylribose-1-pyrophosphate (PRPP) to anthranilate to yield N-(5'-phosphoribosyl)-anthranilate (PRA). The sequence is that of Anthranilate phosphoribosyltransferase from Prochlorococcus marinus (strain SARG / CCMP1375 / SS120).